A 462-amino-acid chain; its full sequence is Probable alcohol acetyltransferase crmB (462 aa).

This sequence belongs to the alcohol acetyltransferase FCK4 family.

The protein operates within secondary metabolite biosynthesis. In terms of biological role, probable alcohol acetyltransferase; part of the crm gene cluster that mediates the biosynthesis of a yet unidentified copper-responsive metabolite. In contrast to crmA, is not involved in the biosynthesis of fumivalines or fumicicolins. The sequence is that of Probable alcohol acetyltransferase crmB from Aspergillus fumigatus (strain ATCC MYA-4609 / CBS 101355 / FGSC A1100 / Af293) (Neosartorya fumigata).